Here is a 423-residue protein sequence, read N- to C-terminus: Kynureninase (423 aa).

Pyridoxal 5'-phosphate-binding positions include leucine 105, serine 106, phenylalanine 133–aspartate 136, aspartate 218, histidine 221, and tyrosine 243. Lysine 244 is subject to N6-(pyridoxal phosphate)lysine. Pyridoxal 5'-phosphate-binding residues include tryptophan 273 and asparagine 301.

Belongs to the kynureninase family. Homodimer. Pyridoxal 5'-phosphate is required as a cofactor.

It carries out the reaction L-kynurenine + H2O = anthranilate + L-alanine + H(+). It catalyses the reaction 3-hydroxy-L-kynurenine + H2O = 3-hydroxyanthranilate + L-alanine + H(+). It participates in amino-acid degradation; L-kynurenine degradation; L-alanine and anthranilate from L-kynurenine: step 1/1. The protein operates within cofactor biosynthesis; NAD(+) biosynthesis; quinolinate from L-kynurenine: step 2/3. Functionally, catalyzes the cleavage of L-kynurenine (L-Kyn) and L-3-hydroxykynurenine (L-3OHKyn) into anthranilic acid (AA) and 3-hydroxyanthranilic acid (3-OHAA), respectively. This is Kynureninase from Xanthomonas oryzae pv. oryzae (strain PXO99A).